A 282-amino-acid chain; its full sequence is 40S small subunit processome assembly factor 1 (282 aa).

Disordered stretches follow at residues 27–98 and 121–143; these read YDLG…SEVP and FHSRSEKRKPKSEEDKPAKNKTK. Residues 48 to 59 are compositionally biased toward basic and acidic residues; it reads KRDSETVADRAA. Phosphoserine is present on residues serine 67 and serine 75. Residues 89 to 98 show a composition bias toward low complexity; sequence SAPAAPSEVP. Residues 131-143 show a composition bias toward basic and acidic residues; that stretch reads KSEEDKPAKNKTK. Lysine 173 carries the post-translational modification N6-acetyllysine. The span at 208 to 226 shows a compositional bias: basic and acidic residues; the sequence is EKRTSMEEEKRAAQETDIF. The tract at residues 208-254 is disordered; it reads EKRTSMEEEKRAAQETDIFKRKKRKGRSQEDRRSKKLAPSILSSGRA. Serine 268 is subject to Phosphoserine.

In terms of assembly, part of the small subunit (SSU) processome, composed of more than 70 proteins and the RNA chaperone small nucleolar RNA (snoRNA) U3.

It localises to the chromosome. It is found in the nucleus. The protein localises to the nucleolus. In terms of biological role, part of the small subunit (SSU) processome, first precursor of the small eukaryotic ribosomal subunit. During the assembly of the SSU processome in the nucleolus, many ribosome biogenesis factors, an RNA chaperone and ribosomal proteins associate with the nascent pre-rRNA and work in concert to generate RNA folding, modifications, rearrangements and cleavage as well as targeted degradation of pre-ribosomal RNA by the RNA exosome. Prevents helicase DHX37 to be recruited before post-A1 state. The chain is 40S small subunit processome assembly factor 1 from Rattus norvegicus (Rat).